Consider the following 389-residue polypeptide: Sulfate adenylyltransferase (389 aa).

Belongs to the sulfate adenylyltransferase family.

It carries out the reaction sulfate + ATP + H(+) = adenosine 5'-phosphosulfate + diphosphate. It functions in the pathway sulfur metabolism; hydrogen sulfide biosynthesis; sulfite from sulfate: step 1/3. This Desulforamulus reducens (strain ATCC BAA-1160 / DSM 100696 / MI-1) (Desulfotomaculum reducens) protein is Sulfate adenylyltransferase.